The following is a 198-amino-acid chain: Recombination protein RecR (198 aa).

The segment at 57–72 (CSVCGHITDQDPCYIC) adopts a C4-type zinc-finger fold. Residues 80–175 (SVICVVQDPK…KLSRIAHGLP (96 aa)) form the Toprim domain.

The protein belongs to the RecR family.

Functionally, may play a role in DNA repair. It seems to be involved in an RecBC-independent recombinational process of DNA repair. It may act with RecF and RecO. This is Recombination protein RecR from Bacillus pumilus (strain SAFR-032).